The chain runs to 101 residues: Acylphosphatase (101 aa).

In terms of domain architecture, Acylphosphatase-like spans 11-99 (SWLVKAIGRV…PRLNRFDRLP (89 aa)). Catalysis depends on residues Arg-26 and Asn-44.

It belongs to the acylphosphatase family.

The catalysed reaction is an acyl phosphate + H2O = a carboxylate + phosphate + H(+). This Polaromonas naphthalenivorans (strain CJ2) protein is Acylphosphatase (acyP).